Here is a 193-residue protein sequence, read N- to C-terminus: Sporulation-specific transcriptional regulator GerR (193 aa).

Residues 1 to 61 (MTITRQDAWT…RWNSYVRKQY (61 aa)) enclose the HTH myb-type domain. Positions 35 to 57 (FEEVGRALTRTAAACGFRWNSYV) form a DNA-binding region, H-T-H motif. A coiled-coil region spans residues 122–177 (AQEFQLEREKLKEQIQSLQKELEDLRSENQTLRNQLEMTEEDYKALIDIMDRARKM).

It belongs to the RsfA transcriptional regulator family.

Transcriptional factor that regulates the expression of several late sporulation genes. Controls genes of both sigma-E and sigma-K regulons, acting alone on some genes and in conjunction with SpoIIID or GerE on others. Regulates, directly or indirectly, the expression of genes encoding coat proteins such as cgeA, cotB, cotC, cotG, cotU and cotY. Controls late sporulation genes in two ways: directly, by binding to the promoter region of genes such as cotB, cotU and spoVIF, and acting directly on their transcription, and indirectly, through the activation of SpoVIF, which stabilizes the transcriptional activator GerE and consequently induces the expression of the GerE-dependent genes, such as cotC and cotG. Its effect is strongly positive on spoVIF, cotC, and cotG, weakly positive on cotB, and negative on cotU. This is Sporulation-specific transcriptional regulator GerR from Bacillus subtilis (strain 168).